The following is a 342-amino-acid chain: Isopentenyl-diphosphate delta-isomerase (342 aa).

11-12 (RK) serves as a coordination point for substrate. Residues Ser68, 69 to 71 (SMT), Ser99, and Asn128 contribute to the FMN site. Position 99-101 (99-101 (SQR)) interacts with substrate. Gln162 is a binding site for substrate. Residue Glu163 participates in Mg(2+) binding. FMN is bound by residues Lys194, Ser219, Thr224, 275-277 (GVR), and 296-297 (AK).

Belongs to the IPP isomerase type 2 family. In terms of assembly, homooctamer. Dimer of tetramers. Requires FMN as cofactor. It depends on NADPH as a cofactor. The cofactor is Mg(2+).

The protein resides in the cytoplasm. The catalysed reaction is isopentenyl diphosphate = dimethylallyl diphosphate. In terms of biological role, involved in the biosynthesis of isoprenoids. Catalyzes the 1,3-allylic rearrangement of the homoallylic substrate isopentenyl (IPP) to its allylic isomer, dimethylallyl diphosphate (DMAPP). The polypeptide is Isopentenyl-diphosphate delta-isomerase (Legionella pneumophila (strain Paris)).